Reading from the N-terminus, the 163-residue chain is MPSFDIVSEVDLQEARNAVDNASREVESRFDFRGVEATFELNDANKTIKVLSESDFQVNQLLDILRAKLLKRGIEGTSLDVPEDIVHSGKTWFVEAKLKQGIESAVQKKIVKLIKDSKLKVQAQIQGEEIRVTGKSRDDLQSVMALVRGGDLGQPFQFKNFRD.

This sequence belongs to the YajQ family.

In terms of biological role, nucleotide-binding protein. This chain is Nucleotide-binding protein KPK_4305, found in Klebsiella pneumoniae (strain 342).